The primary structure comprises 549 residues: Chaperonin GroEL 5 (549 aa).

Residues 30–33 (TLGP), lysine 51, 87–91 (DGTTT), glycine 415, and aspartate 495 contribute to the ATP site.

Belongs to the chaperonin (HSP60) family. In terms of assembly, forms a cylinder of 14 subunits composed of two heptameric rings stacked back-to-back. Interacts with the co-chaperonin GroES.

The protein resides in the cytoplasm. The catalysed reaction is ATP + H2O + a folded polypeptide = ADP + phosphate + an unfolded polypeptide.. Its function is as follows. Together with its co-chaperonin GroES, plays an essential role in assisting protein folding. The GroEL-GroES system forms a nano-cage that allows encapsulation of the non-native substrate proteins and provides a physical environment optimized to promote and accelerate protein folding. This chain is Chaperonin GroEL 5, found in Mesorhizobium japonicum (strain LMG 29417 / CECT 9101 / MAFF 303099) (Mesorhizobium loti (strain MAFF 303099)).